A 205-amino-acid chain; its full sequence is MNQTENMEGTTTVGFVCTDGVVLATETRATMGSLVANKNADKLFQIDDKIGATIAGTVSHAQSLMDILKAEISLYKLRNEKDMSIDALAVLTSNILKSRPYYVQTILAGVDKDGAKLYTLDPSGSYIPDTFTSTGSGSPYAFGVLEDRYNEDITTEEGKKIAIKAITSAMERDVYSGNNYRLGVITKDGMKIYTKEEIAQIKKQL.

The propeptide at 1-9 is removed in mature form; by autocatalysis; that stretch reads MNQTENMEG. The active-site Nucleophile is T10.

It belongs to the peptidase T1B family. As to quaternary structure, the 20S proteasome core is composed of 14 alpha and 14 beta subunits that assemble into four stacked heptameric rings, resulting in a barrel-shaped structure. The two inner rings, each composed of seven catalytic beta subunits, are sandwiched by two outer rings, each composed of seven alpha subunits. The catalytic chamber with the active sites is on the inside of the barrel. Has a gated structure, the ends of the cylinder being occluded by the N-termini of the alpha-subunits. Is capped at one or both ends by the proteasome regulatory ATPase, PAN.

It is found in the cytoplasm. The enzyme catalyses Cleavage of peptide bonds with very broad specificity.. The formation of the proteasomal ATPase PAN-20S proteasome complex, via the docking of the C-termini of PAN into the intersubunit pockets in the alpha-rings, triggers opening of the gate for substrate entry. Interconversion between the open-gate and close-gate conformations leads to a dynamic regulation of the 20S proteasome proteolysis activity. Functionally, component of the proteasome core, a large protease complex with broad specificity involved in protein degradation. The sequence is that of Proteasome subunit beta from Methanosphaera stadtmanae (strain ATCC 43021 / DSM 3091 / JCM 11832 / MCB-3).